The following is a 366-amino-acid chain: Cobalt-precorrin-5B C(1)-methyltransferase (366 aa).

This sequence belongs to the CbiD family.

The enzyme catalyses Co-precorrin-5B + S-adenosyl-L-methionine = Co-precorrin-6A + S-adenosyl-L-homocysteine. The protein operates within cofactor biosynthesis; adenosylcobalamin biosynthesis; cob(II)yrinate a,c-diamide from sirohydrochlorin (anaerobic route): step 6/10. Catalyzes the methylation of C-1 in cobalt-precorrin-5B to form cobalt-precorrin-6A. In Methanococcus maripaludis (strain C7 / ATCC BAA-1331), this protein is Cobalt-precorrin-5B C(1)-methyltransferase.